Here is a 569-residue protein sequence, read N- to C-terminus: Melanophilin (569 aa).

Residues 4–124 (KLDLSKLTDD…MGSLEWYYGH (121 aa)) enclose the RabBD domain. An FYVE-type zinc finger spans residues 58-112 (HLNETHCARCLQPYRLLVAPKRQCLDCHLFTCQDCSHAHPEEEGWLCDPCHLARV). Residues 143-430 (GRLQGGGGPE…MQPGRTTDQE (288 aa)) form a disordered region. Basic and acidic residues-rich tracts occupy residues 352–362 (ETLKRKLEEMT) and 379–390 (EEEAGLNRKTSI). The segment covering 404–415 (SGQTSRQETSPR) has biased composition (polar residues). A coiled-coil region spans residues 431 to 465 (LLELEDRVAVTASEVQQVESEVSNIKSKIAALQAA). The segment at 490 to 569 (GRLGQTPKDP…FAKPVMTQRP (80 aa)) is disordered. Positions 526 to 535 (SQDKAGDSFD) are enriched in basic and acidic residues.

Binds RAB27A that has been activated by GTP-binding via its N-terminus. Binds MYO5A via its C-terminal coiled coil domain.

The protein resides in the melanosome. Its function is as follows. Rab effector protein involved in melanosome transport. Serves as link between melanosome-bound RAB27A and the motor protein MYO5A. The chain is Melanophilin (MLPH) from Felis catus (Cat).